We begin with the raw amino-acid sequence, 61 residues long: Small ribosomal subunit protein uS14 (61 aa).

Zn(2+)-binding residues include Cys-24, Cys-27, Cys-40, and Cys-43.

Belongs to the universal ribosomal protein uS14 family. Zinc-binding uS14 subfamily. Part of the 30S ribosomal subunit. Contacts proteins S3 and S10. It depends on Zn(2+) as a cofactor.

Functionally, binds 16S rRNA, required for the assembly of 30S particles and may also be responsible for determining the conformation of the 16S rRNA at the A site. The sequence is that of Small ribosomal subunit protein uS14 from Streptococcus pyogenes serotype M49 (strain NZ131).